Here is a 282-residue protein sequence, read N- to C-terminus: Bifunctional protein FolD (282 aa).

163–165 (GRS) provides a ligand contact to NADP(+).

This sequence belongs to the tetrahydrofolate dehydrogenase/cyclohydrolase family. As to quaternary structure, homodimer.

It carries out the reaction (6R)-5,10-methylene-5,6,7,8-tetrahydrofolate + NADP(+) = (6R)-5,10-methenyltetrahydrofolate + NADPH. The catalysed reaction is (6R)-5,10-methenyltetrahydrofolate + H2O = (6R)-10-formyltetrahydrofolate + H(+). The protein operates within one-carbon metabolism; tetrahydrofolate interconversion. Its function is as follows. Catalyzes the oxidation of 5,10-methylenetetrahydrofolate to 5,10-methenyltetrahydrofolate and then the hydrolysis of 5,10-methenyltetrahydrofolate to 10-formyltetrahydrofolate. This chain is Bifunctional protein FolD, found in Leuconostoc citreum (strain KM20).